Reading from the N-terminus, the 297-residue chain is N-acetylneuraminate lyase (297 aa).

Aceneuramate contacts are provided by serine 47 and threonine 48. Tyrosine 137 functions as the Proton donor in the catalytic mechanism. Lysine 165 functions as the Schiff-base intermediate with substrate in the catalytic mechanism. Positions 167, 189, 191, 192, and 208 each coordinate aceneuramate.

This sequence belongs to the DapA family. NanA subfamily. Homotetramer.

It is found in the cytoplasm. It catalyses the reaction aceneuramate = aldehydo-N-acetyl-D-mannosamine + pyruvate. The protein operates within amino-sugar metabolism; N-acetylneuraminate degradation; D-fructose 6-phosphate from N-acetylneuraminate: step 1/5. Catalyzes the reversible aldol cleavage of N-acetylneuraminic acid (sialic acid; Neu5Ac) to form pyruvate and N-acetylmannosamine (ManNAc) via a Schiff base intermediate. This chain is N-acetylneuraminate lyase, found in Salmonella paratyphi A (strain AKU_12601).